The sequence spans 475 residues: Putative aldehyde dehydrogenase SH0913 (475 aa).

201-207 (GDGEGVG) contacts NAD(+). Residues E245 and C279 contribute to the active site.

Belongs to the aldehyde dehydrogenase family.

The enzyme catalyses an aldehyde + NAD(+) + H2O = a carboxylate + NADH + 2 H(+). This is Putative aldehyde dehydrogenase SH0913 from Staphylococcus haemolyticus (strain JCSC1435).